The primary structure comprises 466 residues: Adenylosuccinate lyase (466 aa).

Residues 21-22, 97-99, and 130-131 each bind substrate; these read RY, NHD, and TS. Catalysis depends on His180, which acts as the Proton donor/acceptor. Gln259 contributes to the substrate binding site. Ser307 functions as the Proton donor/acceptor in the catalytic mechanism. Substrate contacts are provided by Arg347, Ser352, and Arg356.

It belongs to the lyase 1 family. Adenylosuccinate lyase subfamily. Homotetramer. Residues from neighboring subunits contribute catalytic and substrate-binding residues to each active site.

It carries out the reaction N(6)-(1,2-dicarboxyethyl)-AMP = fumarate + AMP. The catalysed reaction is (2S)-2-[5-amino-1-(5-phospho-beta-D-ribosyl)imidazole-4-carboxamido]succinate = 5-amino-1-(5-phospho-beta-D-ribosyl)imidazole-4-carboxamide + fumarate. It functions in the pathway purine metabolism; AMP biosynthesis via de novo pathway; AMP from IMP: step 2/2. The protein operates within purine metabolism; IMP biosynthesis via de novo pathway; 5-amino-1-(5-phospho-D-ribosyl)imidazole-4-carboxamide from 5-amino-1-(5-phospho-D-ribosyl)imidazole-4-carboxylate: step 2/2. This chain is Adenylosuccinate lyase (purB), found in Dictyostelium discoideum (Social amoeba).